The sequence spans 381 residues: Chaperone protein DnaJ (381 aa).

The J domain maps to 5 to 69; it reads DYYEVLGVSK…EKRARYDRFG (65 aa). The segment at 136 to 218 adopts a CR-type zinc-finger fold; the sequence is GKETEIEVPH…CGGTGHVKKR (83 aa). The Zn(2+) site is built by Cys149, Cys152, Cys166, Cys169, Cys192, Cys195, Cys206, and Cys209. CXXCXGXG motif repeat units lie at residues 149 to 156, 166 to 173, 192 to 199, and 206 to 213; these read CDTCHGSG, CPHCHGSG, CPVCGGTG, and CPTCGGTG. The interval 154–174 is disordered; sequence GSGAKPGTSPQSCPHCHGSGQ.

It belongs to the DnaJ family. As to quaternary structure, homodimer. Requires Zn(2+) as cofactor.

The protein resides in the cytoplasm. Its function is as follows. Participates actively in the response to hyperosmotic and heat shock by preventing the aggregation of stress-denatured proteins and by disaggregating proteins, also in an autonomous, DnaK-independent fashion. Unfolded proteins bind initially to DnaJ; upon interaction with the DnaJ-bound protein, DnaK hydrolyzes its bound ATP, resulting in the formation of a stable complex. GrpE releases ADP from DnaK; ATP binding to DnaK triggers the release of the substrate protein, thus completing the reaction cycle. Several rounds of ATP-dependent interactions between DnaJ, DnaK and GrpE are required for fully efficient folding. Also involved, together with DnaK and GrpE, in the DNA replication of plasmids through activation of initiation proteins. The polypeptide is Chaperone protein DnaJ (Geobacillus thermodenitrificans (strain NG80-2)).